Reading from the N-terminus, the 147-residue chain is Hemoglobin anodic subunit beta (147 aa).

The Globin domain maps to 2–147; the sequence is EWTEDERTAI…VTSALARQYH (146 aa). 2 residues coordinate heme b: His63 and His92.

This sequence belongs to the globin family. In terms of assembly, heterotetramer of two alpha chains and two beta chains. Red blood cells.

Involved in oxygen transport from gills to the various peripheral tissues. The polypeptide is Hemoglobin anodic subunit beta (hbb1) (Anguilla anguilla (European freshwater eel)).